We begin with the raw amino-acid sequence, 427 residues long: Serine--tRNA ligase 2 (427 aa).

Residues 35-53 (RRRSEAQAEVTRLRTELNR) are compositionally biased toward basic and acidic residues. Positions 35-72 (RRRSEAQAEVTRLRTELNRTSRARGRSGPPSEEEKEAA) are disordered. L-serine is bound at residue 230-232 (TAE). Position 261–263 (261–263 (RAE)) interacts with ATP. Position 284 (Glu284) interacts with L-serine. 348 to 351 (EISS) is a binding site for ATP. L-serine is bound at residue Ser383.

This sequence belongs to the class-II aminoacyl-tRNA synthetase family. Type-1 seryl-tRNA synthetase subfamily. As to quaternary structure, homodimer. The tRNA molecule binds across the dimer.

It is found in the cytoplasm. The enzyme catalyses tRNA(Ser) + L-serine + ATP = L-seryl-tRNA(Ser) + AMP + diphosphate + H(+). The catalysed reaction is tRNA(Sec) + L-serine + ATP = L-seryl-tRNA(Sec) + AMP + diphosphate + H(+). It participates in aminoacyl-tRNA biosynthesis; selenocysteinyl-tRNA(Sec) biosynthesis; L-seryl-tRNA(Sec) from L-serine and tRNA(Sec): step 1/1. In terms of biological role, catalyzes the attachment of serine to tRNA(Ser). Is also able to aminoacylate tRNA(Sec) with serine, to form the misacylated tRNA L-seryl-tRNA(Sec), which will be further converted into selenocysteinyl-tRNA(Sec). The chain is Serine--tRNA ligase 2 from Streptomyces avermitilis (strain ATCC 31267 / DSM 46492 / JCM 5070 / NBRC 14893 / NCIMB 12804 / NRRL 8165 / MA-4680).